A 329-amino-acid polypeptide reads, in one-letter code: Deoxynucleotidyltransferase terminal-interacting protein 1 (329 aa).

The disordered stretch occupies residues 1–27 (MGATGDVEQPRGPGGAERGGPELGDAG). Gly residues predominate over residues 12 to 22 (GPGGAERGGPE). Residues 56 to 147 (MTTSFTDPAI…RLTHELPGIK (92 aa)) are important for dimerization. Residues 159–173 (RGSPIPKKRKGRPPG) constitute a DNA-binding region (a.T hook). Ser-161 carries the post-translational modification Phosphoserine. The short motif at 164-170 (PKKRKGR) is the Nuclear localization signal element. The important for DNA and nucleosome binding stretch occupies residues 197–316 (REGPKWDPAR…MRKYMETLRT (120 aa)). Positions 216-237 (GSRANKALGMGGTRGRIYIKHP) form a DNA-binding region, H-T-H motif.

In terms of assembly, monomer and homodimer. A minor proportion may form homotrimers. Interacts with ZNF541. Interacts with the terminal deoxynucleotidyltransferase DNTT. Interacts with TRERF1. Identified in a histone deacetylase complex that contains DNTTIP1, HDAC1 and MIDEAS; this complex assembles into a tetramer that contains four copies of each protein chain. Component of a histone deacetylase complex containing DNTTIP1, ZNF541, HDAC1 and HDAC2. Identified in a complex with KCTD19, HDAC1, HDAC2 and ZNF541.

It is found in the nucleus. Increases DNTT terminal deoxynucleotidyltransferase activity (in vitro). Also acts as a transcriptional regulator, binding to the consensus sequence 5'-GNTGCATG-3' following an AT-tract. Associates with RAB20 promoter and positively regulates its transcription. Binds DNA and nucleosomes; may recruit HDAC1 complexes to nucleosomes or naked DNA. The polypeptide is Deoxynucleotidyltransferase terminal-interacting protein 1 (DNTTIP1) (Bos taurus (Bovine)).